The chain runs to 357 residues: Glutamate 5-kinase (357 aa).

An ATP-binding site is contributed by Lys-7. The substrate site is built by Ser-43, Asp-130, and Asn-142. 162–163 (TD) is an ATP binding site. The 78-residue stretch at 270 to 347 (QGELTLDAGA…PAAGPSPVVV (78 aa)) folds into the PUA domain.

Belongs to the glutamate 5-kinase family.

The protein resides in the cytoplasm. The enzyme catalyses L-glutamate + ATP = L-glutamyl 5-phosphate + ADP. Its pathway is amino-acid biosynthesis; L-proline biosynthesis; L-glutamate 5-semialdehyde from L-glutamate: step 1/2. Its function is as follows. Catalyzes the transfer of a phosphate group to glutamate to form L-glutamate 5-phosphate. The protein is Glutamate 5-kinase of Parasynechococcus marenigrum (strain WH8102).